A 274-amino-acid polypeptide reads, in one-letter code: Malonyl-[acyl-carrier protein] O-methyltransferase (274 aa).

The protein belongs to the methyltransferase superfamily.

The enzyme catalyses malonyl-[ACP] + S-adenosyl-L-methionine = malonyl-[ACP] methyl ester + S-adenosyl-L-homocysteine. Its pathway is cofactor biosynthesis; biotin biosynthesis. In terms of biological role, converts the free carboxyl group of a malonyl-thioester to its methyl ester by transfer of a methyl group from S-adenosyl-L-methionine (SAM). It allows to synthesize pimeloyl-ACP via the fatty acid synthetic pathway. The polypeptide is Malonyl-[acyl-carrier protein] O-methyltransferase (Priestia megaterium (strain DSM 319 / IMG 1521) (Bacillus megaterium)).